The primary structure comprises 336 residues: tRNA (guanine(37)-N(1))-methyltransferase Trm5b (336 aa).

Residues arginine 186, 223–224 (DI), 251–252 (DV), and asparagine 265 contribute to the S-adenosyl-L-methionine site.

It belongs to the class I-like SAM-binding methyltransferase superfamily. TRM5/TYW2 family. As to quaternary structure, monomer.

The protein resides in the cytoplasm. The catalysed reaction is guanosine(37) in tRNA + S-adenosyl-L-methionine = N(1)-methylguanosine(37) in tRNA + S-adenosyl-L-homocysteine + H(+). Its function is as follows. Specifically methylates the N1 position of guanosine-37 in various tRNAs. This is tRNA (guanine(37)-N(1))-methyltransferase Trm5b (trm5b) from Methanocaldococcus jannaschii (strain ATCC 43067 / DSM 2661 / JAL-1 / JCM 10045 / NBRC 100440) (Methanococcus jannaschii).